Reading from the N-terminus, the 194-residue chain is 2,4-dinitrotoluene dioxygenase system, small oxygenase component (194 aa).

Belongs to the bacterial ring-hydroxylating dioxygenase beta subunit family. As to quaternary structure, the 2,4-dinitrotoluene dioxygenase (DNTDO) multicomponent enzyme system is composed of an electron transfer component and a dioxygenase component (iron sulfur protein (ISP)). The electron transfer component is composed of a ferredoxin reductase (DntAa) and a ferredoxin (DntAb), and the dioxygenase component is formed of a large alpha subunit (DntAc) and a small beta subunit (DntAd).

Component of the 2,4-dinitrotoluene dioxygenase (DNTDO) multicomponent enzyme system which catalyzes the incorporation of both atoms of molecular oxygen into 2,4-dinitrotoluene (DNT) to form 4-methyl-5-nitrocatechol (MNC) and nitrite. The beta subunit seems to have a structural role in the holoenzyme. Also able to convert naphthalene to cis-(1R,2S)-dihydroxy-1,2-dihydronaphthalene. The chain is 2,4-dinitrotoluene dioxygenase system, small oxygenase component from Burkholderia sp. (strain RASC).